Here is a 144-residue protein sequence, read N- to C-terminus: Superoxide dismutase [Mn], mitochondrial (144 aa).

Positions 10, 58, and 143 each coordinate Mn(2+).

It belongs to the iron/manganese superoxide dismutase family. As to quaternary structure, homotetramer. Mn(2+) serves as cofactor.

Its subcellular location is the mitochondrion matrix. It carries out the reaction 2 superoxide + 2 H(+) = H2O2 + O2. Functionally, destroys superoxide anion radicals which are normally produced within the cells and which are toxic to biological systems. In Eptatretus stoutii (Pacific hagfish), this protein is Superoxide dismutase [Mn], mitochondrial.